The following is a 504-amino-acid chain: 2-isopropylmalate synthase (504 aa).

The 262-residue stretch at 6 to 267 (IIVFDTTLRD…YTDINFKEIY (262 aa)) folds into the Pyruvate carboxyltransferase domain. The Mn(2+) site is built by D15, H201, H203, and N237. The tract at residues 391-504 (EIIALSSSEC…ALNSYISMKQ (114 aa)) is regulatory domain.

Belongs to the alpha-IPM synthase/homocitrate synthase family. LeuA type 1 subfamily. As to quaternary structure, homodimer. It depends on Mn(2+) as a cofactor.

It is found in the cytoplasm. It carries out the reaction 3-methyl-2-oxobutanoate + acetyl-CoA + H2O = (2S)-2-isopropylmalate + CoA + H(+). It functions in the pathway amino-acid biosynthesis; L-leucine biosynthesis; L-leucine from 3-methyl-2-oxobutanoate: step 1/4. In terms of biological role, catalyzes the condensation of the acetyl group of acetyl-CoA with 3-methyl-2-oxobutanoate (2-ketoisovalerate) to form 3-carboxy-3-hydroxy-4-methylpentanoate (2-isopropylmalate). The protein is 2-isopropylmalate synthase of Campylobacter hominis (strain ATCC BAA-381 / DSM 21671 / CCUG 45161 / LMG 19568 / NCTC 13146 / CH001A).